The primary structure comprises 182 residues: Cell wall protein phiA (182 aa).

A signal peptide spans 1–18 (MKLTSTAALASLAVAATA). N-linked (GlcNAc...) asparagine glycans are attached at residues asparagine 57 and asparagine 107.

This sequence belongs to the phiA family. As to expression, mainly present in phialides and conidia.

Its subcellular location is the secreted. The protein resides in the cell wall. Its function is as follows. Cell wall protein involved in development of asexual structures such as phialide and conidium development, and thus required for spore formation. Plays a role as a general stress protectant produced by the fungus in competition with antagonistic bacteria. The sequence is that of Cell wall protein phiA from Emericella nidulans (strain FGSC A4 / ATCC 38163 / CBS 112.46 / NRRL 194 / M139) (Aspergillus nidulans).